Reading from the N-terminus, the 95-residue chain is uncharacterized protein (95 aa).

A helical membrane pass occupies residues 3 to 23; the sequence is FVIIIAILLLGISLILAFTVL.

Its subcellular location is the membrane. This is an uncharacterized protein from Methanocaldococcus jannaschii (strain ATCC 43067 / DSM 2661 / JAL-1 / JCM 10045 / NBRC 100440) (Methanococcus jannaschii).